Here is a 415-residue protein sequence, read N- to C-terminus: Mitochondrial distribution and morphology protein 12 (415 aa).

The SMP-LTD domain occupies 1–402 (MSFDINWSEL…WPSWVCFDLN (402 aa)). A disordered region spans residues 53–146 (EITIRHIGDP…PPLTDLRRSR (94 aa)). Composition is skewed to acidic residues over residues 62–75 (PFDD…DDDE) and 92–103 (NSSDDDEDDEYD).

It belongs to the MDM12 family. In terms of assembly, component of the ER-mitochondria encounter structure (ERMES) or MDM complex, composed of MMM1, MDM10, MDM12 and MDM34. An MMM1 homodimer associates with one molecule of MDM12 on each side in a pairwise head-to-tail manner, and the SMP-LTD domains of MMM1 and MDM12 generate a continuous hydrophobic tunnel for phospholipid trafficking.

It is found in the mitochondrion outer membrane. The protein localises to the endoplasmic reticulum membrane. Its function is as follows. Component of the ERMES/MDM complex, which serves as a molecular tether to connect the endoplasmic reticulum (ER) and mitochondria. Components of this complex are involved in the control of mitochondrial shape and protein biogenesis, and function in nonvesicular lipid trafficking between the ER and mitochondria. MDM12 is required for the interaction of the ER-resident membrane protein MMM1 and the outer mitochondrial membrane-resident beta-barrel protein MDM10. The MDM12-MMM1 subcomplex functions in the major beta-barrel assembly pathway that is responsible for biogenesis of all mitochondrial outer membrane beta-barrel proteins, and acts in a late step after the SAM complex. The MDM10-MDM12-MMM1 subcomplex further acts in the TOM40-specific pathway after the action of the MDM12-MMM1 complex. Essential for establishing and maintaining the structure of mitochondria and maintenance of mtDNA nucleoids. In Debaryomyces hansenii (strain ATCC 36239 / CBS 767 / BCRC 21394 / JCM 1990 / NBRC 0083 / IGC 2968) (Yeast), this protein is Mitochondrial distribution and morphology protein 12.